Reading from the N-terminus, the 137-residue chain is ATP synthase epsilon chain, chloroplastic (137 aa).

This sequence belongs to the ATPase epsilon chain family. In terms of assembly, F-type ATPases have 2 components, CF(1) - the catalytic core - and CF(0) - the membrane proton channel. CF(1) has five subunits: alpha(3), beta(3), gamma(1), delta(1), epsilon(1). CF(0) has three main subunits: a, b and c.

It is found in the plastid. The protein resides in the chloroplast thylakoid membrane. Produces ATP from ADP in the presence of a proton gradient across the membrane. The sequence is that of ATP synthase epsilon chain, chloroplastic from Hordeum vulgare (Barley).